The primary structure comprises 613 residues: AP-5 complex subunit mu (613 aa).

Positions 309-563 (KQRLLFTIHE…DYAKVSFKIV (255 aa)) constitute an MHD domain. The disordered stretch occupies residues 501–522 (SPLQSRRKGDGDDEESEDESAE). Residues 511–521 (GDDEESEDESA) show a composition bias toward acidic residues.

It belongs to the adaptor complexes medium subunit family. In terms of assembly, probably part of the adaptor protein complex 5 (AP-5).

The protein localises to the cytoplasmic vesicle membrane. This Arabidopsis thaliana (Mouse-ear cress) protein is AP-5 complex subunit mu (AP5M).